Consider the following 447-residue polypeptide: UDP-N-acetylmuramoyl-L-alanyl-D-glutamate--2,6-diaminopimelate ligase (447 aa).

Thr-21 is a UDP-N-acetyl-alpha-D-muramoyl-L-alanyl-D-glutamate binding site. An ATP-binding site is contributed by 74–80; the sequence is GTNGKTT. UDP-N-acetyl-alpha-D-muramoyl-L-alanyl-D-glutamate-binding positions include 117 to 118, Ser-144, Gln-150, and Arg-152; that span reads TT. Lys-184 is modified (N6-carboxylysine). Meso-2,6-diaminopimelate-binding positions include Arg-340, 364–367, Gly-415, and Glu-419; that span reads DNPR. The Meso-diaminopimelate recognition motif motif lies at 364–367; the sequence is DNPR.

Belongs to the MurCDEF family. MurE subfamily. Mg(2+) is required as a cofactor. Post-translationally, carboxylation is probably crucial for Mg(2+) binding and, consequently, for the gamma-phosphate positioning of ATP.

The protein localises to the cytoplasm. The enzyme catalyses UDP-N-acetyl-alpha-D-muramoyl-L-alanyl-D-glutamate + meso-2,6-diaminopimelate + ATP = UDP-N-acetyl-alpha-D-muramoyl-L-alanyl-gamma-D-glutamyl-meso-2,6-diaminopimelate + ADP + phosphate + H(+). It functions in the pathway cell wall biogenesis; peptidoglycan biosynthesis. In terms of biological role, catalyzes the addition of meso-diaminopimelic acid to the nucleotide precursor UDP-N-acetylmuramoyl-L-alanyl-D-glutamate (UMAG) in the biosynthesis of bacterial cell-wall peptidoglycan. The sequence is that of UDP-N-acetylmuramoyl-L-alanyl-D-glutamate--2,6-diaminopimelate ligase from Helicobacter pylori (strain J99 / ATCC 700824) (Campylobacter pylori J99).